The chain runs to 274 residues: Pyrogallol hydroxytransferase small subunit (274 aa).

Residues cysteine 13, cysteine 16, cysteine 19, cysteine 23, cysteine 68, cysteine 71, cysteine 76, cysteine 109, cysteine 126, cysteine 129, cysteine 145, and cysteine 149 each coordinate [4Fe-4S] cluster.

In terms of assembly, heterodimer of a large and a small subunit. [4Fe-4S] cluster is required as a cofactor.

The enzyme catalyses 1,2,3,5-tetrahydroxybenzene + 1,2,3-trihydroxybenzene = 1,2,3,5-tetrahydroxybenzene + 1,3,5-trihydroxybenzene. Functionally, isomerization of pyrogallol to phloroglucin. In Pelobacter acidigallici, this protein is Pyrogallol hydroxytransferase small subunit (bthL).